A 375-amino-acid polypeptide reads, in one-letter code: Growth/differentiation factor 8 (375 aa).

The signal sequence occupies residues 1 to 23; the sequence is MQKLQLCVYIYLFMLIVAGPVDL. Positions 24-266 are excised as a propeptide; that stretch reads NENSEQKENV…VTDTPKRSRR (243 aa). Asparagine 71 is a glycosylation site (N-linked (GlcNAc...) asparagine). Cystine bridges form between cysteine 272–cysteine 282, cysteine 281–cysteine 340, cysteine 309–cysteine 372, and cysteine 313–cysteine 374.

The protein belongs to the TGF-beta family. Homodimer; disulfide-linked. Interacts with WFIKKN2, leading to inhibit its activity. Interacts with FSTL3. Post-translationally, synthesized as large precursor molecule that undergoes proteolytic cleavage to generate an N-terminal propeptide and a disulfide linked C-terminal dimer, which is the biologically active molecule. The circulating form consists of a latent complex of the C-terminal dimer and other proteins, including its propeptide, which maintain the C-terminal dimer in a latent, inactive state. Ligand activation requires additional cleavage of the prodomain by a tolloid-like metalloproteinase.

The protein resides in the secreted. Its function is as follows. Acts specifically as a negative regulator of skeletal muscle growth. This chain is Growth/differentiation factor 8 (MSTN), found in Papio hamadryas (Hamadryas baboon).